A 277-amino-acid chain; its full sequence is Collectin-10 (277 aa).

The N-terminal stretch at 1–27 (MNGFRVLLRSNLSMLLLLALLHFQSLG) is a signal peptide. Residue Asn-11 is glycosylated (N-linked (GlcNAc...) asparagine). The tract at residues 41 to 103 (THTISPGPKG…IGKKGDKGEK (63 aa)) is disordered. One can recognise a Collagen-like domain in the interval 45–103 (SPGPKGDDGERGDTGEEGKDGKVGRQGPKGVKGELGDMGAQGNIGKSGPIGKKGDKGEK). Basic and acidic residues predominate over residues 49 to 67 (KGDDGERGDTGEEGKDGKV). One can recognise a C-type lectin domain in the interval 155–271 (TEEKFYYIVQ…CHLTMYFVCE (117 aa)). 2 cysteine pairs are disulfide-bonded: Cys-176–Cys-270 and Cys-248–Cys-262. Asn-258 carries an N-linked (GlcNAc...) asparagine glycan.

This sequence belongs to the COLEC10/COLEC11 family. In terms of tissue distribution, expressed mainly in the liver and stomach, but also in muscles, testes, and intestines.

It is found in the secreted. It localises to the golgi apparatus. The protein resides in the cytoplasm. In terms of biological role, lectin that binds to various sugars: galactose &gt; mannose = fucose &gt; N-acetylglucosamine &gt; N-acetylgalactosamine. Acts as a chemoattractant, probably involved in the regulation of cell migration. The protein is Collectin-10 (Colec10) of Mus musculus (Mouse).